We begin with the raw amino-acid sequence, 365 residues long: Probable caffeine synthase 2 (365 aa).

Y19 serves as a coordination point for S-adenosyl-L-homocysteine. T26 is a binding site for caffeine. S-adenosyl-L-homocysteine-binding residues include C62, D99, L100, S134, and F135. The caffeine site is built by Y152, H155, and W156. N173 is a binding site for Mg(2+). Position 221 (R221) interacts with caffeine. Mg(2+) is bound by residues D259, F261, and N262. F317 contributes to the caffeine binding site.

The protein belongs to the methyltransferase superfamily. Type-7 methyltransferase family. The cofactor is Mg(2+).

It catalyses the reaction 7-methylxanthine + S-adenosyl-L-methionine = theobromine + S-adenosyl-L-homocysteine + H(+). It carries out the reaction theobromine + S-adenosyl-L-methionine = caffeine + S-adenosyl-L-homocysteine + H(+). The catalysed reaction is 1,7-dimethylxanthine + S-adenosyl-L-methionine = caffeine + S-adenosyl-L-homocysteine + H(+). It participates in alkaloid biosynthesis. May be involved in the biosynthesis of caffeine. Catalyzes the conversion of 7-methylxanthine (7mX) to theobromine and of theobromine to caffeine. Has 1-N-methylation activity. The sequence is that of Probable caffeine synthase 2 from Camellia sinensis (Tea plant).